The chain runs to 72 residues: Putative sodium channel toxin Ts18 (72 aa).

Residues 1–21 (MNFRFPFLLMITISLIGAVLT) form the signal peptide. 3 disulfide bridges follow: C38/C61, C47/C66, and C51/C68.

It belongs to the long (3 C-C) scorpion toxin superfamily. Expressed by the venom gland.

It localises to the secreted. Functionally, binds to sodium channels (Nav) and affects the channel activation process. This Tityus serrulatus (Brazilian scorpion) protein is Putative sodium channel toxin Ts18.